A 237-amino-acid chain; its full sequence is Lectin alpha chain (237 aa).

Mn(2+)-binding residues include Glu8 and Asp10. Residues Asp10, Tyr12, Asn14, and Asp19 each contribute to the Ca(2+) site. Tyr12 is a binding site for a carbohydrate. Residues Asp19 and His24 each contribute to the Mn(2+) site. 99–100 (LY) contacts a carbohydrate. Asp208 is a Ca(2+) binding site. A carbohydrate is bound at residue Arg228.

This sequence belongs to the leguminous lectin family. As to quaternary structure, homotetramer. The beta and gamma chains are produced by partial proteolytic processing of the lectin alpha chain by an asparaginyl endopeptidase.

The protein localises to the vacuole. Its subcellular location is the aleurone grain. Its function is as follows. D-mannose/D-glucose-binding lectin with hemagglutinating activity towards rabbit and human erythrocytes. In rats, elicits an acute inflammatory response by inducing neutrophil migration and induces dose-dependent paw edema. This is Lectin alpha chain from Macropsychanthus wilsonii (Wilson's clusterpea).